Consider the following 272-residue polypeptide: MPNVNPAPIGVFDSGLGGLSVLREIRALLPHESLLYLADSKYAPYGEKPEAFVQARTLQACEWLLAQGCKALVIACNTATGHAVELLRQTLPVPIIGVEPGLKPAAAASQSKVVGVLATANTLKSGKFARLLASLDGESRFICEAGLGLVPLIEQGDIDGPDIRGRLDNYLTPMLEAGADTLVLGCTHYPFLSDTIRDMVGNQLTLVDTGSAIARQLARKLVEHDLAVAPGAVPQDRFVSTKDAAHLRQMAAALLHIETQAETVAIEPAPAF.

Residues D13–S14 and Y45–G46 each bind substrate. The Proton donor/acceptor role is filled by C76. N77–T78 lines the substrate pocket. The active-site Proton donor/acceptor is the C186. T187–H188 contacts substrate.

The protein belongs to the aspartate/glutamate racemases family.

The catalysed reaction is L-glutamate = D-glutamate. It participates in cell wall biogenesis; peptidoglycan biosynthesis. In terms of biological role, provides the (R)-glutamate required for cell wall biosynthesis. The polypeptide is Glutamate racemase (Cupriavidus pinatubonensis (strain JMP 134 / LMG 1197) (Cupriavidus necator (strain JMP 134))).